Consider the following 708-residue polypeptide: Leukotoxin translocation ATP-binding protein LktB (708 aa).

The 126-residue stretch at 1–126 folds into the Peptidase C39 domain; the sequence is MEANHQRNDL…ACYQGQLILV (126 aa). Residues 155–437 enclose the ABC transmembrane type-1 domain; the sequence is FLETLIVSIF…LAQLWQDFQQ (283 aa). 5 helical membrane-spanning segments follow: residues 159–179, 192–212, 270–290, 296–316, and 389–409; these read LIVS…FQVV, LNII…LSGL, ALTS…MWYY, LVIL…SPIL, and VMVI…LSIG. Residues 469–704 enclose the ABC transporter domain; that stretch reads ISFKNIRFRY…SNGLYSYLHQ (236 aa). Residue 503–510 coordinates ATP; sequence GRSGSGKS.

It belongs to the ABC transporter superfamily. Protein-1 exporter (TC 3.A.1.109) family. Homodimer.

It localises to the cell inner membrane. It catalyses the reaction ATP + H2O + proteinSide 1 = ADP + phosphate + proteinSide 2.. Functionally, part of the ABC transporter complex LktBD involved in leukotoxin export. Transmembrane domains (TMD) form a pore in the inner membrane and the ATP-binding domain (NBD) is responsible for energy generation. In Mannheimia haemolytica (Pasteurella haemolytica), this protein is Leukotoxin translocation ATP-binding protein LktB (lktB).